We begin with the raw amino-acid sequence, 545 residues long: Ribulokinase (545 aa).

It belongs to the ribulokinase family.

It carries out the reaction D-ribulose + ATP = D-ribulose 5-phosphate + ADP + H(+). The enzyme catalyses L-ribulose + ATP = L-ribulose 5-phosphate + ADP + H(+). Its pathway is carbohydrate degradation; L-arabinose degradation via L-ribulose; D-xylulose 5-phosphate from L-arabinose (bacterial route): step 2/3. This chain is Ribulokinase, found in Staphylococcus aureus (strain Mu3 / ATCC 700698).